The chain runs to 710 residues: FAST kinase domain-containing protein 2, mitochondrial (710 aa).

2 positions are modified to phosphoserine: serine 126 and serine 140. One can recognise an RAP domain in the interval 634–691; sequence VAVLCVSRSAYCLGSSHPRGFLAMKMRHLNAMGFHVILVNNWEMDKLEMEDAVTFLKT. Serine 708 bears the Phosphoserine mark.

This sequence belongs to the FAST kinase family. In terms of assembly, monomer. Found in a complex with GRSF1, DDX28, DHX30 and FASTKD5. Associates with the 16S mitochondrial rRNA (16S mt-rRNA). Forms a regulatory protein-RNA complex, consisting of RCC1L, NGRN, RPUSD3, RPUSD4, TRUB2, FASTKD2 and 16S mt-rRNA. Expression detected in spleen, thymus, testis, ovary, colon, heart, smooth muscle, kidney, brain, lung, liver and white adipose tissue with highest expression in heart, smooth muscle and thyroid.

The protein resides in the mitochondrion matrix. Its subcellular location is the mitochondrion nucleoid. Its function is as follows. Plays an important role in assembly of the mitochondrial large ribosomal subunit. As a component of a functional protein-RNA module, consisting of RCC1L, NGRN, RPUSD3, RPUSD4, TRUB2, FASTKD2 and 16S mitochondrial ribosomal RNA (16S mt-rRNA), controls 16S mt-rRNA abundance and is required for intra-mitochondrial translation. May play a role in mitochondrial apoptosis. The chain is FAST kinase domain-containing protein 2, mitochondrial from Homo sapiens (Human).